The primary structure comprises 215 residues: Pyrrolidone-carboxylate peptidase (215 aa).

Catalysis depends on residues Glu78, Cys141, and His165.

This sequence belongs to the peptidase C15 family. As to quaternary structure, homotetramer.

It localises to the cytoplasm. The enzyme catalyses Release of an N-terminal pyroglutamyl group from a polypeptide, the second amino acid generally not being Pro.. Functionally, removes 5-oxoproline from various penultimate amino acid residues except L-proline. The protein is Pyrrolidone-carboxylate peptidase (pcp) of Streptococcus pyogenes serotype M1.